Here is a 740-residue protein sequence, read N- to C-terminus: ATP-dependent zinc metalloprotease YME1L (740 aa).

At Met-1–Lys-256 the chain is on the mitochondrial matrix side. The helical transmembrane segment at Thr-257–Thr-277 threads the bilayer. The Mitochondrial intermembrane portion of the chain corresponds to Ser-278–Thr-740. Gly-347–Thr-351 provides a ligand contact to ATP. His-563 serves as a coordination point for Zn(2+). The active site involves Glu-564. His-567 and Asp-641 together coordinate Zn(2+).

It in the N-terminal section; belongs to the AAA ATPase family. The protein in the C-terminal section; belongs to the peptidase M41 family. Zn(2+) serves as cofactor.

The protein resides in the mitochondrion inner membrane. Functionally, ATP-dependent metalloprotease that catalyzes the degradation of folded and unfolded proteins with a suitable degron sequence in the mitochondrial intermembrane region. Plays an important role in regulating mitochondrial morphology and function by cleaving Opa1, giving rise to a form of Opa1 that promotes maintenance of normal mitochondrial structure and mitochondrial protein metabolism. Ensures cell proliferation, maintains normal cristae morphology and complex I respiration activity, promotes antiapoptotic activity and protects mitochondria from the accumulation of oxidatively damaged membrane proteins. Required to control the accumulation of nonassembled respiratory chain subunits such as ND-30. This Drosophila melanogaster (Fruit fly) protein is ATP-dependent zinc metalloprotease YME1L.